Consider the following 229-residue polypeptide: Sodium channel modifier 1 (229 aa).

Ser-2 carries the phosphoserine modification. A Bipartite nuclear localization signal motif is present at residues 4-20; it reads KREGDDWSQLNVLKKRR. The Matrin-type zinc finger occupies 42–74; sequence FACAICPHRPVLDTLAMLTAHRAGKKHLSSLKL. A Glycyl lysine isopeptide (Lys-Gly) (interchain with G-Cter in SUMO2) cross-link involves residue Lys-67. 2 disordered regions span residues 80–105 and 128–187; these read QTGK…EAPL and RRKH…TKRR. A compositionally biased stretch (polar residues) spans 82-92; the sequence is GKGTEQNPRQQ. Over residues 157 to 171 the composition is skewed to basic and acidic residues; it reads ISKEPEPRERSDAKE. Phosphoserine occurs at positions 182 and 218. A required for interaction with LUC7L2 region spans residues 187–229; that stretch reads RVLNHYLTLRSSGWVPDGRGRWIKDENVEFDSDEEEPPDLPLD.

Component of the minor spliceosome. Within this complex, interacts with RNF113A, as well as with SF3B1/SF3b155, SF3B2/SF3b145, SF3B3/SF3b130 and CDC5L. May interact with LUC7L2 and SNRNP70.

Its subcellular location is the nucleus. The protein resides in the nucleoplasm. It localises to the nucleus speckle. As a component of the minor spliceosome, involved in the splicing of U12-type introns in pre-mRNAs. Plays a role in the regulation of primary cilia length and Hedgehog signaling. This Mus musculus (Mouse) protein is Sodium channel modifier 1 (Scnm1).